Reading from the N-terminus, the 202-residue chain is Small ribosomal subunit protein uS4c (202 aa).

Positions 90 to 158 (MRSDNVIFRL…ISKNIELYQK (69 aa)) constitute an S4 RNA-binding domain.

This sequence belongs to the universal ribosomal protein uS4 family. As to quaternary structure, part of the 30S ribosomal subunit. Contacts protein S5. The interaction surface between S4 and S5 is involved in control of translational fidelity.

It is found in the plastid. Its subcellular location is the chloroplast. One of the primary rRNA binding proteins, it binds directly to 16S rRNA where it nucleates assembly of the body of the 30S subunit. In terms of biological role, with S5 and S12 plays an important role in translational accuracy. In Exsertotheca crispa (Moss), this protein is Small ribosomal subunit protein uS4c (rps4).